Consider the following 205-residue polypeptide: Non-specific lipid transfer protein GPI-anchored 13 (205 aa).

The first 24 residues, 1–24 (MESRKIKVMATAIALIMVAMVVDA), serve as a signal peptide directing secretion. Cystine bridges form between C36–C77, C46–C61, C62–C104, and C75–C113. N93, N137, and N165 each carry an N-linked (GlcNAc...) asparagine glycan. Residues 141–176 (SASAPTGSASEPTSMSSTPGSSAGNNSGRTTSVPGT) form a disordered region. N177 carries GPI-anchor amidated asparagine lipidation. The propeptide at 178 to 205 (HAQSFSKQWLGLEVVAHFFVIFYIFILV) is removed in mature form.

It belongs to the plant LTP family. In terms of tissue distribution, expressed preferentially in expanding leaves and sepals, restricted to the distal side. Expressed at low levels in roots and stems.

It is found in the cell membrane. In terms of biological role, probable lipid transfer protein. The protein is Non-specific lipid transfer protein GPI-anchored 13 of Arabidopsis thaliana (Mouse-ear cress).